The sequence spans 78 residues: Alpha-neurotoxin homolog 1 (78 aa).

The first 21 residues, 1 to 21 (MKTLLLTLVVVTIVCLDFGYT), serve as a signal peptide directing secretion. Disulfide bonds link Cys24–Cys42, Cys37–Cys57, Cys59–Cys70, and Cys71–Cys76.

The protein belongs to the three-finger toxin family. Short-chain subfamily. Orphan group XII sub-subfamily. As to expression, expressed by the venom gland.

It is found in the secreted. The sequence is that of Alpha-neurotoxin homolog 1 from Micrurus corallinus (Brazilian coral snake).